The sequence spans 79 residues: Conotoxin Vi6.3 (79 aa).

The first 22 residues, 1–22 (MKLTCVLIITVLFLTASQLITA), serve as a signal peptide directing secretion. Positions 23–47 (DYSRDQRQYRAVRLGDEMRNFKGAR) are excised as a propeptide. Cystine bridges form between cysteine 49–cysteine 62, cysteine 56–cysteine 67, and cysteine 61–cysteine 77. A 4-hydroxyproline mark is found at proline 60 and proline 63.

This sequence belongs to the conotoxin O1 superfamily. As to expression, expressed by the venom duct.

Its subcellular location is the secreted. In terms of biological role, ion channel inhibitor that inhibits the increase in intracellular calcium upon depolarization in DRG neurons. In vivo, both intraperitoneal and intracranial injections into mice induce hyperactivity. This chain is Conotoxin Vi6.3, found in Conus virgo (Virgin cone).